We begin with the raw amino-acid sequence, 479 residues long: Ribosomal RNA small subunit methyltransferase F (479 aa).

S-adenosyl-L-methionine-binding positions include A125–K131, E149, D176, and D194. The active-site Nucleophile is the C247.

This sequence belongs to the class I-like SAM-binding methyltransferase superfamily. RsmB/NOP family.

Its subcellular location is the cytoplasm. The catalysed reaction is cytidine(1407) in 16S rRNA + S-adenosyl-L-methionine = 5-methylcytidine(1407) in 16S rRNA + S-adenosyl-L-homocysteine + H(+). Functionally, specifically methylates the cytosine at position 1407 (m5C1407) of 16S rRNA. The polypeptide is Ribosomal RNA small subunit methyltransferase F (Escherichia fergusonii (strain ATCC 35469 / DSM 13698 / CCUG 18766 / IAM 14443 / JCM 21226 / LMG 7866 / NBRC 102419 / NCTC 12128 / CDC 0568-73)).